The sequence spans 830 residues: GPI ethanolamine phosphate transferase 2 (830 aa).

Positions 1–32 (MNLKQFTCLSCAQLLAILLFIFAFFPRKIVLT) are cleaved as a signal peptide. Over 33–321 (GISKQDPDQD…QYLETVQQID (289 aa)) the chain is Lumenal. Asn-145, Asn-185, and Asn-298 each carry an N-linked (GlcNAc...) asparagine glycan. A helical transmembrane segment spans residues 322 to 342 (IVPTIAALFGMPIPMNSVGII). The Cytoplasmic portion of the chain corresponds to 343-405 (IPDFLQLLPN…TKSATNYNYP (63 aa)). A helical transmembrane segment spans residues 406 to 426 (LLTLAFVGFLIITIIAIYVLL). Topologically, residues 427 to 439 (RYSGPDFWQLRVS) are lumenal. The chain crosses the membrane as a helical span at residues 440–460 (SLSVLLVSIILGVSTFASSFI). Residues 461–469 (EEEHQLWWW) are Cytoplasmic-facing. Residues 470–490 (IVTAFSAVPLFVYRLNVLIIV) form a helical membrane-spanning segment. Topologically, residues 491–533 (RWFIMMACVRSIKFWNNSGQKFIYSNVMSNLLNQNPSWKWCLN) are lumenal. N-linked (GlcNAc...) asparagine glycosylation occurs at Asn-506. Residues 534–554 (MLTFLVLIMASAGFQVLHFIV) traverse the membrane as a helical segment. The Cytoplasmic segment spans residues 555–598 (TTILVGLCFTYKISWEIVNGNQAEIPLFMHDLLAKIDFAPTESN). A helical membrane pass occupies residues 599–619 (LIVLARVFFQAWAIVVISRLV). Over 620 to 651 (LTKLKVLNKNYLIKDMKVYITILLMFQTSSQN) the chain is Lumenal. The helical transmembrane segment at 652–672 (IGQFLVFQILESQIFYFFQNI) threads the bilayer. The Cytoplasmic segment spans residues 673 to 682 (PTASLTSTSK). Residues 683–703 (IYFSNLVSLILQNFTFFQFGG) traverse the membrane as a helical segment. At 704 to 724 (TNSISTIDLGNAYHGVSSDYN) the chain is on the lumenal side. A helical membrane pass occupies residues 725 to 745 (IYVVGILMSVANFAPAIYWSM). At 746–768 (LPWSINYASIPAQVKLQTFIRSK) the chain is on the cytoplasmic side. Residues 769 to 789 (LPAFTYHCIFGTCLMTACVVL) traverse the membrane as a helical segment. The Lumenal portion of the chain corresponds to 790–805 (RFHLFIWSVFSPKLCY). The helical transmembrane segment at 806-826 (FLGWNFVMGLLNGWLPELALL) threads the bilayer. The Cytoplasmic portion of the chain corresponds to 827-830 (CALD).

This sequence belongs to the PIGG/PIGN/PIGO family. PIGG subfamily. Post-translationally, N-glycosylated.

Its subcellular location is the endoplasmic reticulum membrane. It functions in the pathway glycolipid biosynthesis; glycosylphosphatidylinositol-anchor biosynthesis. Functionally, ethanolamine phosphate transferase involved in glycosylphosphatidylinositol-anchor biosynthesis. Transfers ethanolamine phosphate to the GPI second mannose. Although not essential, addition of ethanolamine phosphate to the second mannose plays an important role in cell separation via the GPI-based modification of daughter-specific proteins. This chain is GPI ethanolamine phosphate transferase 2 (LAS21), found in Saccharomyces cerevisiae (strain ATCC 204508 / S288c) (Baker's yeast).